Consider the following 121-residue polypeptide: Large ribosomal subunit protein bL12 (121 aa).

It belongs to the bacterial ribosomal protein bL12 family. Homodimer. Part of the ribosomal stalk of the 50S ribosomal subunit. Forms a multimeric L10(L12)X complex, where L10 forms an elongated spine to which 2 to 4 L12 dimers bind in a sequential fashion. Binds GTP-bound translation factors.

Its function is as follows. Forms part of the ribosomal stalk which helps the ribosome interact with GTP-bound translation factors. Is thus essential for accurate translation. The chain is Large ribosomal subunit protein bL12 from Shewanella frigidimarina (strain NCIMB 400).